A 173-amino-acid chain; its full sequence is Inorganic pyrophosphatase (173 aa).

The substrate site is built by lysine 29, arginine 43, and tyrosine 55. Aspartate 65, aspartate 70, and aspartate 102 together coordinate Mg(2+). Tyrosine 141 serves as a coordination point for substrate.

It belongs to the PPase family. In terms of assembly, homohexamer. Requires Mg(2+) as cofactor.

It is found in the cytoplasm. It carries out the reaction diphosphate + H2O = 2 phosphate + H(+). Functionally, catalyzes the hydrolysis of inorganic pyrophosphate (PPi) forming two phosphate ions. The sequence is that of Inorganic pyrophosphatase from Rickettsia conorii (strain ATCC VR-613 / Malish 7).